A 493-amino-acid polypeptide reads, in one-letter code: Glutamyl-tRNA(Gln) amidotransferase subunit A (493 aa).

Active-site charge relay system residues include K79 and S159. The active-site Acyl-ester intermediate is S183.

It belongs to the amidase family. GatA subfamily. In terms of assembly, heterotrimer of A, B and C subunits.

It carries out the reaction L-glutamyl-tRNA(Gln) + L-glutamine + ATP + H2O = L-glutaminyl-tRNA(Gln) + L-glutamate + ADP + phosphate + H(+). Functionally, allows the formation of correctly charged Gln-tRNA(Gln) through the transamidation of misacylated Glu-tRNA(Gln) in organisms which lack glutaminyl-tRNA synthetase. The reaction takes place in the presence of glutamine and ATP through an activated gamma-phospho-Glu-tRNA(Gln). In Brucella ovis (strain ATCC 25840 / 63/290 / NCTC 10512), this protein is Glutamyl-tRNA(Gln) amidotransferase subunit A.